A 256-amino-acid chain; its full sequence is Ribosomal RNA small subunit methyltransferase A (256 aa).

Positions 12, 14, 39, 60, 85, and 103 each coordinate S-adenosyl-L-methionine.

Belongs to the class I-like SAM-binding methyltransferase superfamily. rRNA adenine N(6)-methyltransferase family. RsmA subfamily.

The protein resides in the cytoplasm. It catalyses the reaction adenosine(1518)/adenosine(1519) in 16S rRNA + 4 S-adenosyl-L-methionine = N(6)-dimethyladenosine(1518)/N(6)-dimethyladenosine(1519) in 16S rRNA + 4 S-adenosyl-L-homocysteine + 4 H(+). In terms of biological role, specifically dimethylates two adjacent adenosines (A1518 and A1519) in the loop of a conserved hairpin near the 3'-end of 16S rRNA in the 30S particle. May play a critical role in biogenesis of 30S subunits. In Legionella pneumophila (strain Corby), this protein is Ribosomal RNA small subunit methyltransferase A.